The sequence spans 796 residues: Kinesin-like protein KIF3C (796 aa).

The 358-residue stretch at 10–367 (ALKVVARCRP…LRFANRAKNI (358 aa)) folds into the Kinesin motor domain. ATP is bound at residue 97-104 (GQTGTGKT). 3 disordered regions span residues 252 to 292 (RQNK…PKEA), 397 to 422 (EKKG…APAG), and 758 to 796 (KVRK…VDHD). Low complexity predominate over residues 256–269 (AGPNAAGGPATQPT). Positions 378–632 (KDTLLREFQE…NEQTRELKLK (255 aa)) form a coiled coil. Over residues 401-416 (MLGKRPRRKSSRRKKA) the composition is skewed to basic residues. Positions 633–793 (YLIIENFIPP…SVPLHPATVV (161 aa)) are globular.

Belongs to the TRAFAC class myosin-kinesin ATPase superfamily. Kinesin family. Kinesin II subfamily. In terms of assembly, heterodimer of KIF3A and KIF3C.

Its subcellular location is the cytoplasm. The protein localises to the cytoskeleton. Microtubule-based anterograde translocator for membranous organelles. This is Kinesin-like protein KIF3C (Kif3c) from Mus musculus (Mouse).